The chain runs to 104 residues: Nucleoid-associated protein Moth_0028 (104 aa).

The protein belongs to the YbaB/EbfC family. Homodimer.

Its subcellular location is the cytoplasm. It is found in the nucleoid. Binds to DNA and alters its conformation. May be involved in regulation of gene expression, nucleoid organization and DNA protection. The sequence is that of Nucleoid-associated protein Moth_0028 from Moorella thermoacetica (strain ATCC 39073 / JCM 9320).